Reading from the N-terminus, the 715-residue chain is 1,4-alpha-glucan branching enzyme GlgB (715 aa).

D396 serves as the catalytic Nucleophile. The active-site Proton donor is E449.

It belongs to the glycosyl hydrolase 13 family. GlgB subfamily. Monomer.

It catalyses the reaction Transfers a segment of a (1-&gt;4)-alpha-D-glucan chain to a primary hydroxy group in a similar glucan chain.. Its pathway is glycan biosynthesis; glycogen biosynthesis. Its function is as follows. Catalyzes the formation of the alpha-1,6-glucosidic linkages in glycogen by scission of a 1,4-alpha-linked oligosaccharide from growing alpha-1,4-glucan chains and the subsequent attachment of the oligosaccharide to the alpha-1,6 position. This is 1,4-alpha-glucan branching enzyme GlgB from Vibrio vulnificus (strain CMCP6).